Consider the following 95-residue polypeptide: Aspartyl/glutamyl-tRNA(Asn/Gln) amidotransferase subunit C (95 aa).

It belongs to the GatC family. As to quaternary structure, heterotrimer of A, B and C subunits.

It carries out the reaction L-glutamyl-tRNA(Gln) + L-glutamine + ATP + H2O = L-glutaminyl-tRNA(Gln) + L-glutamate + ADP + phosphate + H(+). The enzyme catalyses L-aspartyl-tRNA(Asn) + L-glutamine + ATP + H2O = L-asparaginyl-tRNA(Asn) + L-glutamate + ADP + phosphate + 2 H(+). In terms of biological role, allows the formation of correctly charged Asn-tRNA(Asn) or Gln-tRNA(Gln) through the transamidation of misacylated Asp-tRNA(Asn) or Glu-tRNA(Gln) in organisms which lack either or both of asparaginyl-tRNA or glutaminyl-tRNA synthetases. The reaction takes place in the presence of glutamine and ATP through an activated phospho-Asp-tRNA(Asn) or phospho-Glu-tRNA(Gln). This is Aspartyl/glutamyl-tRNA(Asn/Gln) amidotransferase subunit C from Prosthecochloris aestuarii (strain DSM 271 / SK 413).